The sequence spans 367 residues: Tetraacyldisaccharide 4'-kinase (367 aa).

68 to 75 lines the ATP pocket; it reads VLGGSGKT.

The protein belongs to the LpxK family.

The catalysed reaction is a lipid A disaccharide + ATP = a lipid IVA + ADP + H(+). It participates in glycolipid biosynthesis; lipid IV(A) biosynthesis; lipid IV(A) from (3R)-3-hydroxytetradecanoyl-[acyl-carrier-protein] and UDP-N-acetyl-alpha-D-glucosamine: step 6/6. In terms of biological role, transfers the gamma-phosphate of ATP to the 4'-position of a tetraacyldisaccharide 1-phosphate intermediate (termed DS-1-P) to form tetraacyldisaccharide 1,4'-bis-phosphate (lipid IVA). This chain is Tetraacyldisaccharide 4'-kinase, found in Chlamydia abortus (strain DSM 27085 / S26/3) (Chlamydophila abortus).